A 289-amino-acid polypeptide reads, in one-letter code: ATP synthase gamma chain (289 aa).

This sequence belongs to the ATPase gamma chain family. As to quaternary structure, F-type ATPases have 2 components, CF(1) - the catalytic core - and CF(0) - the membrane proton channel. CF(1) has five subunits: alpha(3), beta(3), gamma(1), delta(1), epsilon(1). CF(0) has three main subunits: a, b and c.

Its subcellular location is the cell inner membrane. Produces ATP from ADP in the presence of a proton gradient across the membrane. The gamma chain is believed to be important in regulating ATPase activity and the flow of protons through the CF(0) complex. This is ATP synthase gamma chain from Coxiella burnetii (strain Dugway 5J108-111).